The primary structure comprises 60 residues: Cytotoxin 2 (60 aa).

4 cysteine pairs are disulfide-bonded: C3–C21, C14–C38, C42–C53, and C54–C59.

Belongs to the three-finger toxin family. Short-chain subfamily. Type IA cytotoxin sub-subfamily. As to quaternary structure, monomer, or heterodimer with alpha-cobratoxin (AC P01391); disulfide-linked. Expressed by the venom gland.

The protein localises to the secreted. The protein resides in the target cell membrane. Its function is as follows. Monomer: shows cytolytic activity. Functionally, heterodimer: has no cytolytic activity, but retains most of the alpha-cobratoxin capacity to compete with alpha-bungarotoxin for binding to Torpedo and alpha-7/CHRNA7 nicotinic acetylcholine receptors (nAChRs) as well as to Lymnea stagnalis acetylcholine-binding protein. The chain is Cytotoxin 2 from Naja kaouthia (Monocled cobra).